We begin with the raw amino-acid sequence, 62 residues long: Small ribosomal subunit protein bS21 (62 aa).

This sequence belongs to the bacterial ribosomal protein bS21 family.

This is Small ribosomal subunit protein bS21 (rpsU) from Mycoplasma genitalium (strain ATCC 33530 / DSM 19775 / NCTC 10195 / G37) (Mycoplasmoides genitalium).